A 317-amino-acid polypeptide reads, in one-letter code: Protein lifeguard 2 (317 aa).

Positions 1-54 (MTQGKLSVANKAPGTEGQQHQANGEKKDAPAVPSAPPSYEEATSGEGLKAGTFP) are disordered. Helical transmembrane passes span 107-127 (VYTI…LFTF), 139-159 (PGWY…LACC), and 166-186 (FPWN…LTGM). An N-linked (GlcNAc...) asparagine glycan is attached at Asn-192. A run of 4 helical transmembrane segments spans residues 195–215 (SVLL…IFSF), 226–246 (GVLF…AVLL), 252–272 (PWLH…FLAF), and 291–311 (IFGA…FLQL).

The protein belongs to the BI1 family. LFG subfamily. Interacts with FAS/TNFRSF6 and BAX. As to expression, brain. Highly expressed in cerebellum, also found in cortex, olfactory bulb, and hippocampus.

The protein resides in the cell membrane. It is found in the membrane raft. It localises to the postsynaptic cell membrane. In terms of biological role, antiapoptotic protein which protects cells uniquely from Fas-induced apoptosis. Regulates Fas-mediated apoptosis in neurons by interfering with caspase-8 activation. Plays a role in cerebellar development by affecting cerebellar size, internal granular layer (IGL) thickness, and Purkinje cell (PC) development. This is Protein lifeguard 2 (Faim2) from Mus musculus (Mouse).